The following is a 946-amino-acid chain: MKPLSSPLQQYWQTVVERLPEPLAEKSLSAQAKSVLTFSDFVQDSVIAHPEWLTELESQSPQADEWQHYAAWLQEALSNVSDEAGLMRELRLFRRRIMVRIAWAQTLALVTEESILQQLSHLAETLIVAARDWLYDACCREWGTPCNAQGEAQPLLILGMGKLGGGELNFSSDIDLIFAWPEHGCTQGGRRELDNAQFFTRMGQRLIKVLDQPTQDGFVYRVDMRLRPFGESGPLVLSFAALEDYYQEQGRDWERYAMVKARIMGDSEGVYANELRAMLRPFVFRRYIDFSVIQSLRNMKGMIAREVRRRGLTDNIKLGAGGIREIEFIVQVFQLIRGGREPSLQSRSLLPTLSVIAALHLLSENDAEQLRVAYLFLRRLENLLQSINDEQTQTLPSDELNRARLAWAMDFADWPQLTGALTAHMTNVRRVFNELIGDDESETQEESLSEQWRELWQDALQEDDTTPVLAHLSEDDRKQVLTLIADFRKELDKRTIGPRGRQVLDHLMPHLLSDVCAREDAAVTLSRITALLVGIVTRTTYLELLSEFPAALKHLISLCAASPMIASQLARYPLLLDELLDPNTLYQPTATDAYRDELRQYLLRVPEDDEEQQLEALRQFKQAQLLRIAAADIAGTLPVMKVSDHLTWLAEAMIDAVVQQAWVQMVARYGKPNHLNDREGRGFAVVGYGKLGGWELGYSSDLDLIFLHDCPMDAMTDGEREIDGRQFYLRLAQRIMHLFSTRTSSGILYEVDARLRPSGAAGMLVTSAEAFADYQKNEAWTWEHQALVRARVVYGDPQLTAHFDAVRREIMTLPREGKTLQTEVREMREKMRAHLGNKHRDRFDIKADEGGITDIEFITQYLVLRYAHEKPKLTRWSDNVRILELLAQNDIMEEQEAMALTRAYTTLRDELHHLALQELPGHVPEDCFTAERELVRASWQKWLVEE.

The segment at 1–440 is adenylyl removase; sequence MKPLSSPLQQ…VFNELIGDDE (440 aa). An adenylyl transferase region spans residues 449–946; the sequence is SEQWRELWQD…ASWQKWLVEE (498 aa).

This sequence belongs to the GlnE family. The cofactor is Mg(2+).

The catalysed reaction is [glutamine synthetase]-O(4)-(5'-adenylyl)-L-tyrosine + phosphate = [glutamine synthetase]-L-tyrosine + ADP. It catalyses the reaction [glutamine synthetase]-L-tyrosine + ATP = [glutamine synthetase]-O(4)-(5'-adenylyl)-L-tyrosine + diphosphate. Involved in the regulation of glutamine synthetase GlnA, a key enzyme in the process to assimilate ammonia. When cellular nitrogen levels are high, the C-terminal adenylyl transferase (AT) inactivates GlnA by covalent transfer of an adenylyl group from ATP to specific tyrosine residue of GlnA, thus reducing its activity. Conversely, when nitrogen levels are low, the N-terminal adenylyl removase (AR) activates GlnA by removing the adenylyl group by phosphorolysis, increasing its activity. The regulatory region of GlnE binds the signal transduction protein PII (GlnB) which indicates the nitrogen status of the cell. This chain is Bifunctional glutamine synthetase adenylyltransferase/adenylyl-removing enzyme, found in Escherichia coli (strain SE11).